The chain runs to 176 residues: Lipoprotein signal peptidase (176 aa).

The next 4 membrane-spanning stretches (helical) occupy residues 26–46 (LWLA…IVIV), 57–77 (VTGF…SFLA), 82–102 (WQRW…VWLL), and 111–131 (FCFA…DRVI). Residues Asp137 and Asp155 contribute to the active site. The chain crosses the membrane as a helical span at residues 147–167 (HWPAFNVADCAITVGAVLLIV).

This sequence belongs to the peptidase A8 family.

It localises to the cell inner membrane. The catalysed reaction is Release of signal peptides from bacterial membrane prolipoproteins. Hydrolyzes -Xaa-Yaa-Zaa-|-(S,diacylglyceryl)Cys-, in which Xaa is hydrophobic (preferably Leu), and Yaa (Ala or Ser) and Zaa (Gly or Ala) have small, neutral side chains.. The protein operates within protein modification; lipoprotein biosynthesis (signal peptide cleavage). This protein specifically catalyzes the removal of signal peptides from prolipoproteins. In Cupriavidus taiwanensis (strain DSM 17343 / BCRC 17206 / CCUG 44338 / CIP 107171 / LMG 19424 / R1) (Ralstonia taiwanensis (strain LMG 19424)), this protein is Lipoprotein signal peptidase.